The sequence spans 282 residues: Bifunctional protein FolD (282 aa).

Residues 164–166 and S189 each bind NADP(+); that span reads GRS.

This sequence belongs to the tetrahydrofolate dehydrogenase/cyclohydrolase family. As to quaternary structure, homodimer.

The enzyme catalyses (6R)-5,10-methylene-5,6,7,8-tetrahydrofolate + NADP(+) = (6R)-5,10-methenyltetrahydrofolate + NADPH. It carries out the reaction (6R)-5,10-methenyltetrahydrofolate + H2O = (6R)-10-formyltetrahydrofolate + H(+). Its pathway is one-carbon metabolism; tetrahydrofolate interconversion. Catalyzes the oxidation of 5,10-methylenetetrahydrofolate to 5,10-methenyltetrahydrofolate and then the hydrolysis of 5,10-methenyltetrahydrofolate to 10-formyltetrahydrofolate. In Streptococcus suis (strain 98HAH33), this protein is Bifunctional protein FolD.